The sequence spans 523 residues: Glycerate kinase (523 aa).

Residue S60 is modified to Phosphoserine.

It belongs to the glycerate kinase type-2 family. In terms of tissue distribution, widely expressed.

The protein localises to the cytoplasm. It localises to the mitochondrion. The catalysed reaction is (R)-glycerate + ATP = (2R)-3-phosphoglycerate + ADP + H(+). The chain is Glycerate kinase (GLYCTK) from Homo sapiens (Human).